The chain runs to 101 residues: Small ribosomal subunit protein uS14 (101 aa).

This sequence belongs to the universal ribosomal protein uS14 family. Part of the 30S ribosomal subunit. Contacts proteins S3 and S10.

In terms of biological role, binds 16S rRNA, required for the assembly of 30S particles and may also be responsible for determining the conformation of the 16S rRNA at the A site. The chain is Small ribosomal subunit protein uS14 from Orientia tsutsugamushi (strain Ikeda) (Rickettsia tsutsugamushi).